A 115-amino-acid chain; its full sequence is Probable non-functional immunoglobulin heavy variable 3-38-3 (115 aa).

The first 19 residues, 1–19 (MQFVLSWVFLVAILKGVQC), serve as a signal peptide directing secretion. The tract at residues 20-44 (EVQLVESRGVLVQPGGSLRLSCAAS) is framework-1. Positions 31 to 115 (VQPGGSLRLS…EDTAVYYCKK (85 aa)) constitute an Ig-like domain. C41 and C113 are oxidised to a cystine. A complementarity-determining-1 region spans residues 45 to 52 (GFTVSSNE). The segment at 53–69 (MSWVRQAPGKGLEWVSS) is framework-2. Residues 70–75 (ISGGST) are complementarity-determining-2. The segment at 76 to 113 (YYADSRKGRFTISRDNSKNTLHLQMNSLRAEDTAVYYC) is framework-3. The interval 114–115 (KK) is complementarity-determining-3.

Immunoglobulins are composed of two identical heavy chains and two identical light chains; disulfide-linked.

The protein localises to the secreted. It localises to the cell membrane. In terms of biological role, probable non-functional open reading frame (ORF) of V region of the variable domain of immunoglobulin heavy chains. Non-functional ORF generally cannot participate in the synthesis of a productive immunoglobulin chain due to altered V-(D)-J or switch recombination and/or splicing site (at mRNA level) and/or conserved amino acid change (protein level). Immunoglobulins, also known as antibodies, are membrane-bound or secreted glycoproteins produced by B lymphocytes. In the recognition phase of humoral immunity, the membrane-bound immunoglobulins serve as receptors which, upon binding of a specific antigen, trigger the clonal expansion and differentiation of B lymphocytes into immunoglobulins-secreting plasma cells. Secreted immunoglobulins mediate the effector phase of humoral immunity, which results in the elimination of bound antigens. The antigen binding site is formed by the variable domain of one heavy chain, together with that of its associated light chain. Thus, each immunoglobulin has two antigen binding sites with remarkable affinity for a particular antigen. The variable domains are assembled by a process called V-(D)-J rearrangement and can then be subjected to somatic hypermutations which, after exposure to antigen and selection, allow affinity maturation for a particular antigen. In Homo sapiens (Human), this protein is Probable non-functional immunoglobulin heavy variable 3-38-3.